We begin with the raw amino-acid sequence, 511 residues long: Portal protein (511 aa).

Belongs to the Tevenvirinae portal protein family. As to quaternary structure, homododecamer. Interacts with the large terminase subunit. Interacts with the major capsid protein. Interacts with the capsid vertex protein.

Its subcellular location is the virion. In terms of biological role, forms the portal vertex of the capsid. This portal plays critical roles in head assembly, genome packaging, neck/tail attachment, and genome ejection. The portal protein multimerizes as a single ring-shaped homododecamer arranged around a central channel. Binds to the terminase subunits to form the packaging machine. The chain is Portal protein from Vibrio phage KVP40 (isolate Vibrio parahaemolyticus/Japan/Matsuzaki/1991) (KVP40).